The following is a 510-amino-acid chain: NAD(P)H-quinone oxidoreductase subunit 2 B, chloroplastic (510 aa).

The next 12 helical transmembrane spans lie at 24–44 (LLLF…GLIL), 59–79 (WFYF…LFRW), 99–119 (IFQF…VEYI), 124–144 (MAIT…MFLC), 149–169 (LITI…LSGY), 183–203 (YLLM…WLYG), 229–249 (ISIA…PAPF), 295–315 (WHLL…LLAI), 323–343 (MLAY…IVGD), 354–374 (YMLF…LFGL), 395–415 (ALSL…AGFF), and 418–438 (LYLF…IGLL).

This sequence belongs to the complex I subunit 2 family. As to quaternary structure, NDH is composed of at least 16 different subunits, 5 of which are encoded in the nucleus.

The protein resides in the plastid. The protein localises to the chloroplast thylakoid membrane. It catalyses the reaction a plastoquinone + NADH + (n+1) H(+)(in) = a plastoquinol + NAD(+) + n H(+)(out). The catalysed reaction is a plastoquinone + NADPH + (n+1) H(+)(in) = a plastoquinol + NADP(+) + n H(+)(out). NDH shuttles electrons from NAD(P)H:plastoquinone, via FMN and iron-sulfur (Fe-S) centers, to quinones in the photosynthetic chain and possibly in a chloroplast respiratory chain. The immediate electron acceptor for the enzyme in this species is believed to be plastoquinone. Couples the redox reaction to proton translocation, and thus conserves the redox energy in a proton gradient. The chain is NAD(P)H-quinone oxidoreductase subunit 2 B, chloroplastic from Lolium perenne (Perennial ryegrass).